We begin with the raw amino-acid sequence, 220 residues long: Thiopurine S-methyltransferase (220 aa).

Tryptophan 10, leucine 45, glutamate 66, and arginine 123 together coordinate S-adenosyl-L-methionine.

It belongs to the class I-like SAM-binding methyltransferase superfamily. TPMT family.

It is found in the cytoplasm. It carries out the reaction S-adenosyl-L-methionine + a thiopurine = S-adenosyl-L-homocysteine + a thiopurine S-methylether.. The protein is Thiopurine S-methyltransferase of Pseudomonas syringae pv. syringae (strain B728a).